A 96-amino-acid polypeptide reads, in one-letter code: C-C motif chemokine 20 (96 aa).

A signal peptide spans 1–26 (MCCTKSLLLAALMSVLLLHLCGESEA). Intrachain disulfides connect Cys32-Cys58 and Cys33-Cys74.

It belongs to the intercrine beta (chemokine CC) family. C-terminal processed forms which lack 1, 3 or 6 amino acids are produced by proteolytic cleavage after secretion from peripheral blood monocytes. Expressed in the seminal plasma, endometrial fluid and follicular fluid (at protein level). Expressed predominantly in the liver, lymph nodes, appendix, peripheral blood lymphocytes, and fetal lung. Low levels seen in thymus, prostate, testis, small intestine and colon.

The protein localises to the secreted. Functionally, acts as a ligand for C-C chemokine receptor CCR6. Signals through binding and activation of CCR6 and induces a strong chemotactic response and mobilization of intracellular calcium ions. The ligand-receptor pair CCL20-CCR6 is responsible for the chemotaxis of dendritic cells (DC), effector/memory T-cells and B-cells and plays an important role at skin and mucosal surfaces under homeostatic and inflammatory conditions, as well as in pathology, including cancer and various autoimmune diseases. CCL20 acts as a chemotactic factor that attracts lymphocytes and, slightly, neutrophils, but not monocytes. Involved in the recruitment of both the pro-inflammatory IL17 producing helper T-cells (Th17) and the regulatory T-cells (Treg) to sites of inflammation. Required for optimal migration of thymic natural regulatory T cells (nTregs) and DN1 early thymocyte progenitor cells. C-terminal processed forms have been shown to be equally chemotactically active for leukocytes. Positively regulates sperm motility and chemotaxis via its binding to CCR6 which triggers Ca2+ mobilization in the sperm which is important for its motility. Inhibits proliferation of myeloid progenitors in colony formation assays. May be involved in formation and function of the mucosal lymphoid tissues by attracting lymphocytes and dendritic cells towards epithelial cells. Possesses antibacterial activity towards E.coli ATCC 25922 and S.aureus ATCC 29213. This is C-C motif chemokine 20 (CCL20) from Homo sapiens (Human).